The primary structure comprises 541 residues: Presenilin homolog (541 aa).

Polar residues-rich tracts occupy residues 1–14 and 43–52; these read MAAVNLQASCSSGL and NNYGSSNQDQ. Disordered regions lie at residues 1–52 and 69–92; these read MAAV…NQDQ and CGSRPSRLTGGGGGSGGPPTNEME. The Cytoplasmic segment spans residues 1 to 106; that stretch reads MAAVNLQASC…LKYGAQHVIK (106 aa). Residues 107-127 traverse the membrane as a helical segment; that stretch reads LFVPVSLCMLVVVATINSISF. At 128–154 the chain is on the lumenal side; it reads YNSTDVYLLYTPFHEQSPEPSVKFWSA. Asparagine 129 carries an N-linked (GlcNAc...) asparagine glycan. Residues 155–175 form a helical membrane-spanning segment; that stretch reads LANSLILMSVVVVMTFLLIVL. Residues 176–182 are Cytoplasmic-facing; sequence YKKRCYR. Residues 183–203 form a helical membrane-spanning segment; sequence IIHGWLILSSFMLLFIFTYLY. Over 204–216 the chain is Lumenal; it reads LEELLRAYNIPMD. A helical membrane pass occupies residues 217-237; it reads YPTALLIMWNFGVVGMMSIHW. At 238–242 the chain is on the cytoplasmic side; the sequence is QGPLR. The chain crosses the membrane as a helical span at residues 243–263; the sequence is LQQGYLIFVAALMALVFIKYL. Topologically, residues 264 to 265 are lumenal; sequence PE. A helical transmembrane segment spans residues 266–286; it reads WTAWAVLAAISIWDLIAVLSP. Aspartate 279 is an active-site residue. The Cytoplasmic segment spans residues 287–453; the sequence is RGPLRILVET…QNHPDGQEER (167 aa). The interaction with Mettl2 stretch occupies residues 320–481; the sequence is NTVTPQQSQA…ASSYGDWTTT (162 aa). Residues 327 to 350 show a composition bias toward low complexity; it reads SQATASSSPSSSNSTTTTRATQNS. Disordered stretches follow at residues 327-379 and 421-449; these read SQAT…DGSV and EVQSTQSGNAQRSNEYRTVTAPDQNHPDG. 2 stretches are compositionally biased toward polar residues: residues 361 to 370 and 421 to 443; these read GQRTGNSHPR and EVQSTQSGNAQRSNEYRTVTAPD. A helical transmembrane segment spans residues 454–474; the sequence is GIKLGLGDFIFYSVLVGKASS. Residue aspartate 461 is part of the active site. Residues 475-481 are Lumenal-facing; that stretch reads YGDWTTT. Residues 482–502 form a helical membrane-spanning segment; that stretch reads IACFVAILIGLCLTLLLLAIW. Topologically, residues 503–506 are cytoplasmic; sequence RKAL. The PAL motif lies at 507–509; it reads PAL. Residues 507–527 constitute an intramembrane region (helical); sequence PALPISITFGLIFCFATSAVV. Residues 528–541 are Cytoplasmic-facing; that stretch reads KPFMEDLSAKQVFI.

This sequence belongs to the peptidase A22A family. In terms of assembly, homodimer. Component of the gamma-secretase complex, a complex composed of a presenilin (Psn) homodimer, nicastrin (Nct), Aph-1 and Pen-2. Interacts with Mettl2. Isoform 2 shows a better interaction with Mettl2 than isoform 1. Post-translationally, cleaved. The cleavage, which probably takes place between the 6th and the 7th transmembrane regions, may be required for activation of the gamma-secretase activity. Maternally expressed in nurse and follicle cells. In early embryos, expressed in all or most cells and later increases in CNS and epidermal tissues. In larvae, expression is seen in all imaginal disks, brain and optic lobes. In pupae, expression is seen in eye disk and brain.

It localises to the endoplasmic reticulum membrane. The protein localises to the golgi apparatus membrane. Its function is as follows. Probable catalytic subunit of the gamma-secretase complex, an endoprotease complex that catalyzes the intramembrane cleavage of integral membrane proteins such as Notch receptor. Required for S3 cleavage of Notch, which releases activated Notch protein from the cell membrane. Involved in the patterning of the optic lobes. This chain is Presenilin homolog (Psn), found in Drosophila melanogaster (Fruit fly).